Reading from the N-terminus, the 406-residue chain is NADH-ubiquinone oxidoreductase 49 kDa subunit (406 aa).

Belongs to the complex I 49 kDa subunit family. As to quaternary structure, complex I is composed of 45 different subunits. Component of the iron-sulfur (IP) fragment of the enzyme.

The protein resides in the mitochondrion inner membrane. The enzyme catalyses a ubiquinone + NADH + 5 H(+)(in) = a ubiquinol + NAD(+) + 4 H(+)(out). Functionally, core subunit of the mitochondrial membrane respiratory chain NADH dehydrogenase (Complex I) that is believed to belong to the minimal assembly required for catalysis. Complex I functions in the transfer of electrons from NADH to the respiratory chain. The immediate electron acceptor for the enzyme is believed to be ubiquinone. The sequence is that of NADH-ubiquinone oxidoreductase 49 kDa subunit (nad7) from Dictyostelium discoideum (Social amoeba).